The following is an 859-amino-acid chain: Photoactivated adenylate cyclase subunit beta-like protein ST- (859 aa).

The BLUF 1 domain maps to 56-149; that stretch reads LRRLMYLSKS…GRMYGDWHMK (94 aa). Residues 420–444 are disordered; it reads RPPIFDDTPKSNPRPRTPGYGGRQR. The BLUF 2 domain occupies 471–563; it reads LTTLTYISQA…RVYTSEWTLT (93 aa). The interval 814–859 is disordered; sequence ARSGEQPLTEPEQAKPDFRVSPGRDRHGVSGRRSNSSQGKGSIQVG. A compositionally biased stretch (basic and acidic residues) spans 825 to 841; sequence EQAKPDFRVSPGRDRHG. Residues 845 to 859 are compositionally biased toward polar residues; it reads RRSNSSQGKGSIQVG.

Heterotetramer of two alpha and two beta subunits.

It localises to the cell projection. Its subcellular location is the cilium. It is found in the flagellum. The chain is Photoactivated adenylate cyclase subunit beta-like protein ST- from Euglena gracilis.